A 290-amino-acid chain; its full sequence is Cbb3-type cytochrome c oxidase subunit CcoP (290 aa).

The disordered stretch occupies residues 1–22 (MSVKPTKQKPGEPPTTGHSWDG). Residues 1-37 (MSVKPTKQKPGEPPTTGHSWDGIEEFDNPMPRWWLWT) are Cytoplasmic-facing. Residues 38 to 58 (FYVTIVWAIGYSILYPAWPLI) traverse the membrane as a helical segment. Residues 59–290 (NGATNGLIGH…VYVHGLGGGE (232 aa)) are Periplasmic-facing. Cytochrome c domains follow at residues 109 to 199 (YATN…LQIS) and 206 to 287 (ALSA…HGLG). Heme c contacts are provided by cysteine 122, cysteine 125, histidine 126, methionine 174, cysteine 219, cysteine 222, histidine 223, and methionine 264.

It belongs to the CcoP / FixP family. Component of the cbb3-type cytochrome c oxidase at least composed of CcoN, CcoO, CcoQ and CcoP. Requires heme c as cofactor.

The protein resides in the cell inner membrane. Its pathway is energy metabolism; oxidative phosphorylation. C-type cytochrome. Part of the cbb3-type cytochrome c oxidase complex. CcoP subunit is required for transferring electrons from donor cytochrome c via its heme groups to CcoO subunit. From there, electrons are shuttled to the catalytic binuclear center of CcoN subunit where oxygen reduction takes place. The complex also functions as a proton pump. The polypeptide is Cbb3-type cytochrome c oxidase subunit CcoP (Cereibacter sphaeroides (strain ATCC 17023 / DSM 158 / JCM 6121 / CCUG 31486 / LMG 2827 / NBRC 12203 / NCIMB 8253 / ATH 2.4.1.) (Rhodobacter sphaeroides)).